We begin with the raw amino-acid sequence, 264 residues long: S-adenosylmethionine decarboxylase proenzyme (264 aa).

Catalysis depends on serine 112, which acts as the Schiff-base intermediate with substrate; via pyruvic acid. Serine 112 is modified (pyruvic acid (Ser); by autocatalysis). Histidine 117 functions as the Proton acceptor; for processing activity in the catalytic mechanism. Cysteine 140 (proton donor; for catalytic activity) is an active-site residue.

The protein belongs to the prokaryotic AdoMetDC family. Type 2 subfamily. In terms of assembly, heterooctamer of four alpha and four beta chains arranged as a tetramer of alpha/beta heterodimers. Pyruvate is required as a cofactor. Is synthesized initially as an inactive proenzyme. Formation of the active enzyme involves a self-maturation process in which the active site pyruvoyl group is generated from an internal serine residue via an autocatalytic post-translational modification. Two non-identical subunits are generated from the proenzyme in this reaction, and the pyruvate is formed at the N-terminus of the alpha chain, which is derived from the carboxyl end of the proenzyme. The post-translation cleavage follows an unusual pathway, termed non-hydrolytic serinolysis, in which the side chain hydroxyl group of the serine supplies its oxygen atom to form the C-terminus of the beta chain, while the remainder of the serine residue undergoes an oxidative deamination to produce ammonia and the pyruvoyl group blocking the N-terminus of the alpha chain.

It catalyses the reaction S-adenosyl-L-methionine + H(+) = S-adenosyl 3-(methylsulfanyl)propylamine + CO2. The protein operates within amine and polyamine biosynthesis; S-adenosylmethioninamine biosynthesis; S-adenosylmethioninamine from S-adenosyl-L-methionine: step 1/1. Functionally, catalyzes the decarboxylation of S-adenosylmethionine to S-adenosylmethioninamine (dcAdoMet), the propylamine donor required for the synthesis of the polyamines spermine and spermidine from the diamine putrescine. The polypeptide is S-adenosylmethionine decarboxylase proenzyme (Salmonella typhi).